We begin with the raw amino-acid sequence, 264 residues long: Thymidylate synthase (264 aa).

Arg21 contacts dUMP. His51 provides a ligand contact to (6R)-5,10-methylene-5,6,7,8-tetrahydrofolate. 126–127 is a binding site for dUMP; it reads RR. The active-site Nucleophile is the Cys146. DUMP is bound by residues 166 to 169, Asn177, and 207 to 209; these read RSCD and HLY. Residue Asp169 coordinates (6R)-5,10-methylene-5,6,7,8-tetrahydrofolate. Position 263 (Ala263) interacts with (6R)-5,10-methylene-5,6,7,8-tetrahydrofolate.

It belongs to the thymidylate synthase family. Bacterial-type ThyA subfamily. Homodimer.

It localises to the cytoplasm. The enzyme catalyses dUMP + (6R)-5,10-methylene-5,6,7,8-tetrahydrofolate = 7,8-dihydrofolate + dTMP. Its pathway is pyrimidine metabolism; dTTP biosynthesis. Functionally, catalyzes the reductive methylation of 2'-deoxyuridine-5'-monophosphate (dUMP) to 2'-deoxythymidine-5'-monophosphate (dTMP) while utilizing 5,10-methylenetetrahydrofolate (mTHF) as the methyl donor and reductant in the reaction, yielding dihydrofolate (DHF) as a by-product. This enzymatic reaction provides an intracellular de novo source of dTMP, an essential precursor for DNA biosynthesis. In Aeromonas salmonicida (strain A449), this protein is Thymidylate synthase.